Here is a 169-residue protein sequence, read N- to C-terminus: ATP synthase subunit b (169 aa).

A helical transmembrane segment spans residues 12–32; it reads HIYLGNALWYLICFAILLLLI.

It belongs to the ATPase B chain family. As to quaternary structure, F-type ATPases have 2 components, F(1) - the catalytic core - and F(0) - the membrane proton channel. F(1) has five subunits: alpha(3), beta(3), gamma(1), delta(1), epsilon(1). F(0) has three main subunits: a(1), b(2) and c(10-14). The alpha and beta chains form an alternating ring which encloses part of the gamma chain. F(1) is attached to F(0) by a central stalk formed by the gamma and epsilon chains, while a peripheral stalk is formed by the delta and b chains.

It is found in the cell membrane. Functionally, f(1)F(0) ATP synthase produces ATP from ADP in the presence of a proton or sodium gradient. F-type ATPases consist of two structural domains, F(1) containing the extramembraneous catalytic core and F(0) containing the membrane proton channel, linked together by a central stalk and a peripheral stalk. During catalysis, ATP synthesis in the catalytic domain of F(1) is coupled via a rotary mechanism of the central stalk subunits to proton translocation. Component of the F(0) channel, it forms part of the peripheral stalk, linking F(1) to F(0). The chain is ATP synthase subunit b from Lactobacillus helveticus (strain DPC 4571).